Consider the following 377-residue polypeptide: Progesterone receptor (377 aa).

The segment at 1 to 15 is modulating, Pro-Rich; that stretch reads EASQSPQYSFESLPQ. Residues 16–90 constitute a DNA-binding region (nuclear receptor); that stretch reads KICLICGDEA…AGMVLGGRKF (75 aa). 2 NR C4-type zinc fingers span residues 18–38 and 54–78; these read CLICGDEASGCHYGVLTCGSC and CAGRNDCIVDKIRRKNCPACRLRKC. A Phosphoserine modification is found at S127. Positions 130-364 constitute an NR LBD domain; it reads QDLQLIPPLI…EFPEMMSEVI (235 aa). An AF2; mediates transcriptional activation region spans residues 138–377; that stretch reads LINLLMSIEP…LPKILAGMVK (240 aa).

Belongs to the nuclear hormone receptor family. NR3 subfamily. In terms of assembly, interacts with CUEDC2, SMARD1 and with UNC45A. Interacts with PRMT2. Interacts with NCOA2 and NCOA1. Interacts with KLF9. Interacts with GTF2B. In terms of processing, palmitoylated by ZDHHC7 and ZDHHC21. Palmitoylation is required for plasma membrane targeting and for rapid intracellular signaling via ERK and AKT kinases and cAMP generation.

The protein localises to the nucleus. In terms of biological role, the steroid hormones and their receptors are involved in the regulation of eukaryotic gene expression and affect cellular proliferation and differentiation in target tissues. Transcriptional activator of several progesteron-dependent promoters in a variety of cell types. Involved in activation of SRC-dependent MAPK signaling on hormone stimulation. This chain is Progesterone receptor (PGR), found in Ovis aries (Sheep).